Here is a 768-residue protein sequence, read N- to C-terminus: DNA replication licensing factor MCM3 homolog 2 (768 aa).

In terms of domain architecture, MCM spans 290-497 (TFDLLGNSLA…IDRQISEHVA (208 aa)). 340-347 (GDPSVAKS) is an ATP binding site. The Arginine finger motif lies at 472–475 (SRFD). Residues 661–670 (EMKQQADHDA) are compositionally biased toward basic and acidic residues. Positions 661-689 (EMKQQADHDAGATGGTVDGHGSSGNDPMD) are disordered. Residues 672 to 682 (ATGGTVDGHGS) show a composition bias toward gly residues.

It belongs to the MCM family.

It localises to the nucleus. The catalysed reaction is ATP + H2O = ADP + phosphate + H(+). Acts as a factor that allows the DNA to undergo a single round of replication per cell cycle. Required for DNA replication and cell proliferation. May act as a component of the MCM complex which is the putative replicative helicase of the replication licensing system in eukaryotic cells. The chain is DNA replication licensing factor MCM3 homolog 2 (ROA2) from Zea mays (Maize).